Here is a 551-residue protein sequence, read N- to C-terminus: Endolytic murein transglycosylase (551 aa).

Over methionine 1–lysine 187 the chain is Cytoplasmic. Residues valine 38–lysine 180 are disordered. Composition is skewed to low complexity over residues proline 100–arginine 110 and glutamine 145–threonine 157. Positions aspartate 159–lysine 174 are enriched in basic and acidic residues. Residues alanine 188–tyrosine 208 traverse the membrane as a helical segment. Residues glutamine 209–asparagine 551 are Extracellular-facing.

This sequence belongs to the transglycosylase MltG family. In terms of assembly, interacts with RodZ. Interacts with MreC in the elongasome; interaction is strongly reduced when the 90 C-terminal residues of MreC are missing. Interacts with KhpB (also called EloR/Jag) via MltG's N-terminus, suggesting the N-terminus of MltG is cytoplasmic.

The protein resides in the cell membrane. It catalyses the reaction a peptidoglycan chain = a peptidoglycan chain with N-acetyl-1,6-anhydromuramyl-[peptide] at the reducing end + a peptidoglycan chain with N-acetylglucosamine at the non-reducing end.. Functions as a peptidoglycan terminase that cleaves nascent peptidoglycan strands endolytically to terminate their elongation. Functionally, mutations in this gene suppress deletion of PBP2b (penA); truncation at residue 168, undefined changes between residue Ile-447 and Ala-505, and mutation of Ala-505 suppress the penA deletion. Probably part of the elongasome which synthesizes peripheral peptidoglycan. This chain is Endolytic murein transglycosylase, found in Streptococcus pneumoniae (strain ATCC BAA-255 / R6).